We begin with the raw amino-acid sequence, 141 residues long: Ribosomal RNA large subunit methyltransferase H (141 aa).

Glycine 88 provides a ligand contact to S-adenosyl-L-methionine.

This sequence belongs to the RNA methyltransferase RlmH family. As to quaternary structure, homodimer.

The protein localises to the cytoplasm. The catalysed reaction is pseudouridine(1915) in 23S rRNA + S-adenosyl-L-methionine = N(3)-methylpseudouridine(1915) in 23S rRNA + S-adenosyl-L-homocysteine + H(+). Functionally, specifically methylates the pseudouridine at position 1915 (m3Psi1915) in 23S rRNA. The chain is Ribosomal RNA large subunit methyltransferase H from Novosphingobium aromaticivorans (strain ATCC 700278 / DSM 12444 / CCUG 56034 / CIP 105152 / NBRC 16084 / F199).